Here is a 535-residue protein sequence, read N- to C-terminus: Cytochrome P450 monooxygenase BOA7 (535 aa).

A helical transmembrane segment spans residues 20–37; that stretch reads SIFLILGFFVLAAILIAW. Asparagine 65, asparagine 148, asparagine 180, and asparagine 420 each carry an N-linked (GlcNAc...) asparagine glycan. Residue cysteine 478 participates in heme binding.

Belongs to the cytochrome P450 family. Heme is required as a cofactor.

It is found in the membrane. It functions in the pathway polyketide biosynthesis. Its function is as follows. Cytochrome P450 monooxygenase; part of the gene cluster B that mediates the biosynthesis of botcinic acid and its botcinin derivatives, acetate-derived polyketides that contribute to virulence when combined with the sesquiterpene botrydial. Botcinic acid and its derivatives have been shown to induce chlorosis and necrosis during host plant infection, but also have antifungal activities. Two polyketide synthases, BOA6 and BOA9, are involved in the biosynthesis of botcinins. BOA6 mediates the formation of the per-methylated tetraketide core by condensation of four units of malonyl-CoA with one unit of acetyl-CoA, which would be methylated in activated methylene groups to yield a bicyclic acid intermediate that could then either be converted to botrylactone derivatives or lose the starter acetate unit through a retro-Claisen type C-C bond cleavage to yield botcinin derivatives. The second polyketide synthase, BOA9, is probably required for the biosynthesis of the tetraketide side chain of botcinins. The methyltransferase (MT) domain within BOA6 is probably responsible for the incorporation of four methyl groups. The trans-enoyl reductase BOA5 might take over the enoyl reductase function of BOA6 that misses an ER domain. The monooxygenases BOA2, BOA3 and BOA4 might be involved in further hydroxylations at C4, C5 and C8, whereas BOA7, close to BOA9, could potentially be involved in the hydroxylation at C4 in the side chain of botcinins. The sequence is that of Cytochrome P450 monooxygenase BOA7 from Botryotinia fuckeliana (strain B05.10) (Noble rot fungus).